A 362-amino-acid polypeptide reads, in one-letter code: Probable dual-specificity RNA methyltransferase RlmN (362 aa).

Glutamate 105 acts as the Proton acceptor in catalysis. The 234-residue stretch at 111-344 folds into the Radical SAM core domain; it reads HEYGNSICVT…VTIRREQGHD (234 aa). An intrachain disulfide couples cysteine 118 to cysteine 349. The [4Fe-4S] cluster site is built by cysteine 125, cysteine 129, and cysteine 132. Residues 175 to 176, serine 207, 230 to 232, and asparagine 306 each bind S-adenosyl-L-methionine; these read GE and SLH. Residue cysteine 349 is the S-methylcysteine intermediate of the active site.

This sequence belongs to the radical SAM superfamily. RlmN family. [4Fe-4S] cluster serves as cofactor.

The protein localises to the cytoplasm. The enzyme catalyses adenosine(2503) in 23S rRNA + 2 reduced [2Fe-2S]-[ferredoxin] + 2 S-adenosyl-L-methionine = 2-methyladenosine(2503) in 23S rRNA + 5'-deoxyadenosine + L-methionine + 2 oxidized [2Fe-2S]-[ferredoxin] + S-adenosyl-L-homocysteine. The catalysed reaction is adenosine(37) in tRNA + 2 reduced [2Fe-2S]-[ferredoxin] + 2 S-adenosyl-L-methionine = 2-methyladenosine(37) in tRNA + 5'-deoxyadenosine + L-methionine + 2 oxidized [2Fe-2S]-[ferredoxin] + S-adenosyl-L-homocysteine. Specifically methylates position 2 of adenine 2503 in 23S rRNA and position 2 of adenine 37 in tRNAs. The polypeptide is Probable dual-specificity RNA methyltransferase RlmN (Bacillus mycoides (strain KBAB4) (Bacillus weihenstephanensis)).